We begin with the raw amino-acid sequence, 329 residues long: Ketol-acid reductoisomerase (NADP(+)) (329 aa).

Residues 1–181 (MKIYYDQDAD…GGTRGGVLTT (181 aa)) enclose the KARI N-terminal Rossmann domain. NADP(+)-binding positions include 24 to 27 (YGSQ), Arg47, and 82 to 85 (DQHQ). Residue His107 is part of the active site. Gly133 is an NADP(+) binding site. One can recognise a KARI C-terminal knotted domain in the interval 182–327 (TFKEETETDL…AKLRGMMSWL (146 aa)). Mg(2+)-binding residues include Asp190, Glu194, Glu226, and Glu230. Ser251 lines the substrate pocket.

It belongs to the ketol-acid reductoisomerase family. It depends on Mg(2+) as a cofactor.

It catalyses the reaction (2R)-2,3-dihydroxy-3-methylbutanoate + NADP(+) = (2S)-2-acetolactate + NADPH + H(+). It carries out the reaction (2R,3R)-2,3-dihydroxy-3-methylpentanoate + NADP(+) = (S)-2-ethyl-2-hydroxy-3-oxobutanoate + NADPH + H(+). It functions in the pathway amino-acid biosynthesis; L-isoleucine biosynthesis; L-isoleucine from 2-oxobutanoate: step 2/4. The protein operates within amino-acid biosynthesis; L-valine biosynthesis; L-valine from pyruvate: step 2/4. Its function is as follows. Involved in the biosynthesis of branched-chain amino acids (BCAA). Catalyzes an alkyl-migration followed by a ketol-acid reduction of (S)-2-acetolactate (S2AL) to yield (R)-2,3-dihydroxy-isovalerate. In the isomerase reaction, S2AL is rearranged via a Mg-dependent methyl migration to produce 3-hydroxy-3-methyl-2-ketobutyrate (HMKB). In the reductase reaction, this 2-ketoacid undergoes a metal-dependent reduction by NADPH to yield (R)-2,3-dihydroxy-isovalerate. The protein is Ketol-acid reductoisomerase (NADP(+)) of Solidesulfovibrio magneticus (strain ATCC 700980 / DSM 13731 / RS-1) (Desulfovibrio magneticus).